Here is a 390-residue protein sequence, read N- to C-terminus: Stearoyl-[acyl-carrier-protein] 9-desaturase, chloroplastic (390 aa).

Residues M1 to M27 constitute a chloroplast transit peptide. E132, E170, H173, E223, E256, and H259 together coordinate Fe cation.

Belongs to the fatty acid desaturase type 2 family. In terms of assembly, homodimer. It depends on Fe(2+) as a cofactor.

It localises to the plastid. The protein localises to the chloroplast. It catalyses the reaction octadecanoyl-[ACP] + 2 reduced [2Fe-2S]-[ferredoxin] + O2 + 2 H(+) = (9Z)-octadecenoyl-[ACP] + 2 oxidized [2Fe-2S]-[ferredoxin] + 2 H2O. It participates in lipid metabolism; fatty acid metabolism. Its function is as follows. Converts stearoyl-ACP to oleoyl-ACP by introduction of a cis double bond between carbons 9 and 10 of the acyl chain. This is Stearoyl-[acyl-carrier-protein] 9-desaturase, chloroplastic from Olea europaea (Common olive).